Here is a 454-residue protein sequence, read N- to C-terminus: Putative serine/threonine-protein phosphatase C27B7.6 (454 aa).

Mn(2+) contacts are provided by Asp-65, His-67, Asp-93, and Asn-125. His-126 serves as the catalytic Proton donor. Mn(2+) contacts are provided by His-174 and His-252. Positions 414–454 (RKKLGMTTSTTPPPPRTPSPDAPLAQSPPIPRSPPSSTENA) are disordered. The span at 424–447 (TPPPPRTPSPDAPLAQSPPIPRSP) shows a compositional bias: pro residues.

Belongs to the PPP phosphatase family. PP-1 subfamily. Mn(2+) serves as cofactor.

The catalysed reaction is O-phospho-L-seryl-[protein] + H2O = L-seryl-[protein] + phosphate. The enzyme catalyses O-phospho-L-threonyl-[protein] + H2O = L-threonyl-[protein] + phosphate. The sequence is that of Putative serine/threonine-protein phosphatase C27B7.6 from Caenorhabditis elegans.